The sequence spans 39 residues: Bacteriocin E50-52 (39 aa).

Its subcellular location is the secreted. Functionally, bacteriocin active against the Gram-negative bacteria C.jejuni, Y.enterocolitica and Y.pseudotuberculosis, and the Gram-positive bacteria S.aureus, S.epidermidis, L.monocytogenes and Listeria spp. When added to the drinking water of chickens, causes a decrease in the levels of C.jejuni and S.enteritidis in the ceca, and in the levels of S.enteritidis in the liver and spleen. In Enterococcus faecium (Streptococcus faecium), this protein is Bacteriocin E50-52.